The following is a 363-amino-acid chain: MKFFNREKEIEEILHIIESEPQRINFIFGSINSGKTALINEIINNRLNKDKYVVFYFDLREIFISKYDDFIEVLFEEYEEPFIDKVKRLFLSLIKDYPDVIKSYALLNITGVVDSIPIPKNTLNELLKKRNVKNVFRYITSVLIKIKREGKQPIIIIDELQKIGDLKLNGFLIYELFNYFVSLTKHKHLCHVFCLSSDSLFIERVYNEAMLEGRCKYILVDDFDRETALKFMDFLAKENNINLTNEDKELIYNYVGGKPIDIIYVINEMKYKKLEDILTSMLKEETQKLKYFLENVKEEDEELYKKVVDALKIFKDSYEIEDIKIPKKLREFLVKKNILFLNPIEGTLKPQSFLVWNAIKRIL.

29–36 is a binding site for ATP; sequence GSINSGKT.

Belongs to the archaeal ATPase family.

This is an uncharacterized protein from Methanocaldococcus jannaschii (strain ATCC 43067 / DSM 2661 / JAL-1 / JCM 10045 / NBRC 100440) (Methanococcus jannaschii).